The sequence spans 177 residues: ATP synthase subunit delta (177 aa).

It belongs to the ATPase delta chain family. In terms of assembly, F-type ATPases have 2 components, F(1) - the catalytic core - and F(0) - the membrane proton channel. F(1) has five subunits: alpha(3), beta(3), gamma(1), delta(1), epsilon(1). F(0) has three main subunits: a(1), b(2) and c(10-14). The alpha and beta chains form an alternating ring which encloses part of the gamma chain. F(1) is attached to F(0) by a central stalk formed by the gamma and epsilon chains, while a peripheral stalk is formed by the delta and b chains.

Its subcellular location is the cell inner membrane. Its function is as follows. F(1)F(0) ATP synthase produces ATP from ADP in the presence of a proton or sodium gradient. F-type ATPases consist of two structural domains, F(1) containing the extramembraneous catalytic core and F(0) containing the membrane proton channel, linked together by a central stalk and a peripheral stalk. During catalysis, ATP synthesis in the catalytic domain of F(1) is coupled via a rotary mechanism of the central stalk subunits to proton translocation. Functionally, this protein is part of the stalk that links CF(0) to CF(1). It either transmits conformational changes from CF(0) to CF(1) or is implicated in proton conduction. The protein is ATP synthase subunit delta of Azobacteroides pseudotrichonymphae genomovar. CFP2.